We begin with the raw amino-acid sequence, 64 residues long: Large ribosomal subunit protein bL35 (64 aa).

It belongs to the bacterial ribosomal protein bL35 family.

The chain is Large ribosomal subunit protein bL35 from Leifsonia xyli subsp. xyli (strain CTCB07).